A 696-amino-acid chain; its full sequence is Putative cyclic nucleotide-gated ion channel 13 (696 aa).

Residues 1–81 are Cytoplasmic-facing; sequence MAFGRNNRVR…QGSFLQNWNK (81 aa). The disordered stretch occupies residues 45-65; that stretch reads KPLSFGSHNKKRDSNSSTTTQ. A helical transmembrane segment spans residues 82-102; the sequence is IFLFASVIALAIDPLFFYIPI. Topologically, residues 103–116 are extracellular; it reads VDGERHCLNLHRNL. Residues 117–137 form a helical membrane-spanning segment; sequence EIAASVLRTFIDAFYIIHIVF. The Cytoplasmic portion of the chain corresponds to 138 to 170; it reads QFRTAYISPSSRVFGRGELVDDPKAIAIKYLSS. A helical transmembrane segment spans residues 171 to 191; sequence YFIIDLLSILPLPQLVVLAVI. The Extracellular segment spans residues 192-204; the sequence is PNVNKPVSLITKD. Residues 205–225 traverse the membrane as a helical segment; sequence YLITVIFTQYIPRILRIYPLY. Topologically, residues 226 to 243 are cytoplasmic; that stretch reads TEVTRTSGIVTETAWAGA. Residues 244–264 traverse the membrane as a helical segment; that stretch reads AWNLSLYMLASHVFGALWYLI. At 265 to 367 the chain is on the extracellular side; that stretch reads SVEREDRCWR…GQNLNTSKFV (103 aa). Residues 368–388 form a helical membrane-spanning segment; that stretch reads GEIIFAVSICISGLVLFALLI. The Cytoplasmic portion of the chain corresponds to 389 to 696; it reads GNMQKYLEST…SEPDFSLRNP (308 aa). A nucleoside 3',5'-cyclic phosphate is bound by residues 474–598 and Glu545; that span reads LFEI…SKQL. A calmodulin-binding region spans residues 590–605; it reads FRRLHSKQLQHTFRFY. The IQ domain maps to 610-639; that stretch reads RTWGASFIQAAWRRHCRRKLARSLTEEEDR. The interval 677-696 is disordered; it reads NNLPLLPPKPSEPDFSLRNP.

The protein belongs to the cyclic nucleotide-gated cation channel (TC 1.A.1.5) family. In terms of assembly, homotetramer or heterotetramer.

It is found in the cell membrane. Functionally, putative cyclic nucleotide-gated ion channel. The chain is Putative cyclic nucleotide-gated ion channel 13 (CNGC13) from Arabidopsis thaliana (Mouse-ear cress).